Reading from the N-terminus, the 716-residue chain is Polycystin-2 (716 aa).

2 stretches are compositionally biased toward basic and acidic residues: residues 1–10 and 30–41; these read MNYGAADERW and MVSEEYEHDKKK. The interval 1 to 44 is disordered; it reads MNYGAADERWANPPQPVAAAEHGPSFDHSMVSEEYEHDKKKNPA. The Cytoplasmic segment spans residues 1–72; the sequence is MNYGAADERW…SDGKIKLTAR (72 aa). A helical transmembrane segment spans residues 73–93; it reads SFMEVGGYAVFLIVLVYVAFA. At 94–324 the chain is on the extracellular side; the sequence is QNSIQSYYYS…YQTSGGTRMM (231 aa). N-linked (GlcNAc...) asparagine glycosylation is found at asparagine 150 and asparagine 177. Cysteines 180 and 193 form a disulfide. A helical transmembrane segment spans residues 325 to 345; it reads IFEGIFCGFILYFIFEELFAI. Topologically, residues 346–355 are cytoplasmic; the sequence is GRHRLHYLTQ. A helical membrane pass occupies residues 356–376; that stretch reads FWNLVDVVLLGFSVATIILSV. Asparagine 377 is a glycosylation site (N-linked (GlcNAc...) asparagine). Topologically, residues 377–409 are extracellular; the sequence is NRTKTGVNRVNSVIENGLTNAPFDDVTSSENSY. Residues 410 to 430 traverse the membrane as a helical segment; the sequence is LNIKACVVFVAWVKVFKFISV. At 431 to 447 the chain is on the cytoplasmic side; that stretch reads NKTMSQLSSTLTRSAKD. Residues 448-468 traverse the membrane as a helical segment; that stretch reads IGGFAVMFAVFFFAFAQFGYL. The Extracellular portion of the chain corresponds to 469 to 482; sequence CFGTQIADYSNLYN. The pore-forming intramembrane region spans 483 to 497; it reads SAFALLRLILGDFNF. The Extracellular portion of the chain corresponds to 498–510; the sequence is SALESCNRFFGPA. The helical transmembrane segment at 511–531 threads the bilayer; it reads FFIAYVFFVSFILLNMFLAII. The Cytoplasmic portion of the chain corresponds to 532 to 716; sequence NDSYVEVKAE…ITSIADKKEE (185 aa). Position 534 is a phosphoserine; by CK2 (serine 534). A coiled-coil region spans residues 613–680; the sequence is EKVAEDIADE…IEKQRVQQQD (68 aa). The segment at 696–716 is disordered; the sequence is RNRESAARRPTITSIADKKEE.

The protein belongs to the polycystin family. Phosphorylated. CK2 (kin-3 and kin-10) and calcineurin act antagonistically to regulate the phosphorylation state. In terms of tissue distribution, exclusively expressed in a subset of 3 categories of adult male sensory neurons: ray neurons, hook neurons and head cephalic (CEM) neurons. Expressed in the male tail.

It is found in the cell membrane. It localises to the cell projection. Its subcellular location is the cilium membrane. The protein localises to the cilium. The protein resides in the axon. It is found in the dendrite. It localises to the perikaryon. Its subcellular location is the endoplasmic reticulum membrane. In terms of biological role, functions as a calcium permeable cation channel. Required for 2 aspects of male mating behavior: response to hermaphrodite contact and vulva location. Acts in the same pathway as lov-1 and atp-2 in response behavior. This Caenorhabditis elegans protein is Polycystin-2.